We begin with the raw amino-acid sequence, 319 residues long: Olfactory receptor 8K1 (319 aa).

The Extracellular portion of the chain corresponds to 1 to 31; the sequence is MNHVVKHNHTAVTKVTEFILMGITDNPGLQA. Residue asparagine 8 is glycosylated (N-linked (GlcNAc...) asparagine). Residues 32–52 form a helical membrane-spanning segment; that stretch reads PLFGLFLIIYLVTVIGNLGMV. At 53–60 the chain is on the cytoplasmic side; the sequence is ILTYLDSK. Residues 61-81 form a helical membrane-spanning segment; it reads LHTPMYFFLRHLSITDLGYST. The Extracellular portion of the chain corresponds to 82-105; sequence VIAPKMLVNFIVHKNTISYNWYAT. Residues 106-126 form a helical membrane-spanning segment; it reads QLAFFEIFIISELFILSAMAY. Topologically, residues 127 to 145 are cytoplasmic; that stretch reads DRYVAICKPLLYVIIMAEK. Residues 146 to 166 form a helical membrane-spanning segment; that stretch reads VLWVLVIVPYLYSTFVSLFLT. The Extracellular portion of the chain corresponds to 167–203; it reads IKLFKLSFCGSNIISYFYCDCIPLMSILCSDTNELEL. Residues 204–223 traverse the membrane as a helical segment; the sequence is IILIFSGCNLLFSLSIVLIS. Residues 224-243 are Cytoplasmic-facing; sequence YMFILVAILRMNSRKGRYKA. A helical membrane pass occupies residues 244-264; it reads FSTCSSHLTVVIMFYGTLLFI. Topologically, residues 265–277 are extracellular; sequence YLQPKSSHTLAID. The helical transmembrane segment at 278–298 threads the bilayer; it reads KMASVFYTLLIPMLNPLIYSL. Residues 299-319 lie on the Cytoplasmic side of the membrane; the sequence is RNKEVKDALKRTLTNRFKIPI.

It belongs to the G-protein coupled receptor 1 family.

It is found in the cell membrane. Odorant receptor. This chain is Olfactory receptor 8K1 (OR8K1), found in Homo sapiens (Human).